Reading from the N-terminus, the 469-residue chain is Glutamate--tRNA ligase (469 aa).

A 'HIGH' region motif is present at residues 11–21 (PSPTGFIHLGN). The segment covering 116–131 (ASGEKPRYDGTWRPEP) has biased composition (basic and acidic residues). A disordered region spans residues 116–139 (ASGEKPRYDGTWRPEPGKVLPTPP). A 'KMSKS' region motif is present at residues 243-247 (KMSKR). K246 is an ATP binding site.

This sequence belongs to the class-I aminoacyl-tRNA synthetase family. Glutamate--tRNA ligase type 1 subfamily. Monomer.

Its subcellular location is the cytoplasm. It carries out the reaction tRNA(Glu) + L-glutamate + ATP = L-glutamyl-tRNA(Glu) + AMP + diphosphate. In terms of biological role, catalyzes the attachment of glutamate to tRNA(Glu) in a two-step reaction: glutamate is first activated by ATP to form Glu-AMP and then transferred to the acceptor end of tRNA(Glu). The sequence is that of Glutamate--tRNA ligase from Paraburkholderia phymatum (strain DSM 17167 / CIP 108236 / LMG 21445 / STM815) (Burkholderia phymatum).